We begin with the raw amino-acid sequence, 244 residues long: Mannose-binding protein C (244 aa).

Residues 1-18 form the signal peptide; the sequence is MSLFTSFLLLCVLTAVYA. Residues 38-96 enclose the Collagen-like domain; that stretch reads GLNGFPGKDGHDGAKGEKGEPGQGLRGLQGPPGKVGPAGPPGNPGSKGATGPKGDRGES. P43 is modified (4-hydroxyproline). Residues 43–99 are disordered; sequence PGKDGHDGAKGEKGEPGQGLRGLQGPPGKVGPAGPPGNPGSKGATGPKGDRGESVEF. The span at 45 to 57 shows a compositional bias: basic and acidic residues; sequence KDGHDGAKGEKGE. 4-hydroxyproline occurs at positions 58, 69, 78, and 81. A compositionally biased stretch (low complexity) spans 65–74; that stretch reads LQGPPGKVGP. The stretch at 108–126 forms a coiled coil; it reads IAALRSELRAMRKWVLLSM. A C-type lectin domain is found at 129–241; sequence NVGKKYFMSS…CSDSFLVVCE (113 aa). 2 disulfides stabilise this stretch: C151–C240 and C218–C232.

As to quaternary structure, oligomeric complex of 3 or more homotrimers. Interacts with MASP1 and MASP2. Interacts with MEP1A and MEP1B and may inhibit their catalytic activity.

It is found in the secreted. Functionally, calcium-dependent lectin involved in innate immune defense. Binds mannose, fucose and N-acetylglucosamine on different microorganisms and activates the lectin complement pathway. Binds to late apoptotic cells, as well as to apoptotic blebs and to necrotic cells, but not to early apoptotic cells, facilitating their uptake by macrophages. This chain is Mannose-binding protein C (Mbl2), found in Rattus norvegicus (Rat).